The sequence spans 201 residues: Ribosome maturation factor RimP (201 aa).

It belongs to the RimP family.

The protein resides in the cytoplasm. Functionally, required for maturation of 30S ribosomal subunits. This is Ribosome maturation factor RimP from Acidiphilium cryptum (strain JF-5).